We begin with the raw amino-acid sequence, 265 residues long: Hydroxyethylthiazole kinase (265 aa).

A substrate-binding site is contributed by Met-43. The ATP site is built by Arg-119 and Ser-165. Ala-192 lines the substrate pocket.

Belongs to the Thz kinase family. Mg(2+) is required as a cofactor.

It catalyses the reaction 5-(2-hydroxyethyl)-4-methylthiazole + ATP = 4-methyl-5-(2-phosphooxyethyl)-thiazole + ADP + H(+). It participates in cofactor biosynthesis; thiamine diphosphate biosynthesis; 4-methyl-5-(2-phosphoethyl)-thiazole from 5-(2-hydroxyethyl)-4-methylthiazole: step 1/1. Its function is as follows. Catalyzes the phosphorylation of the hydroxyl group of 4-methyl-5-beta-hydroxyethylthiazole (THZ). The polypeptide is Hydroxyethylthiazole kinase (Haemophilus influenzae (strain 86-028NP)).